The chain runs to 419 residues: UDP-N-acetylglucosamine 1-carboxyvinyltransferase 2 (419 aa).

A phosphoenolpyruvate-binding site is contributed by 24–25 (KN). A UDP-N-acetyl-alpha-D-glucosamine-binding site is contributed by Arg94. Cys118 serves as the catalytic Proton donor. Cys118 bears the 2-(S-cysteinyl)pyruvic acid O-phosphothioketal mark. UDP-N-acetyl-alpha-D-glucosamine-binding positions include 123–127 (RPIDQ), Asp307, and Ile329.

This sequence belongs to the EPSP synthase family. MurA subfamily.

The protein localises to the cytoplasm. The enzyme catalyses phosphoenolpyruvate + UDP-N-acetyl-alpha-D-glucosamine = UDP-N-acetyl-3-O-(1-carboxyvinyl)-alpha-D-glucosamine + phosphate. Its pathway is cell wall biogenesis; peptidoglycan biosynthesis. Cell wall formation. Adds enolpyruvyl to UDP-N-acetylglucosamine. The protein is UDP-N-acetylglucosamine 1-carboxyvinyltransferase 2 of Staphylococcus aureus (strain MSSA476).